The primary structure comprises 213 residues: Orotate phosphoribosyltransferase (213 aa).

Residue Lys-26 coordinates 5-phospho-alpha-D-ribose 1-diphosphate. 34–35 (FF) is an orotate binding site. Residues 72 to 73 (YK), Arg-99, Lys-100, Lys-103, His-105, and 124 to 132 (DDVITAGTA) each bind 5-phospho-alpha-D-ribose 1-diphosphate. Positions 128 and 156 each coordinate orotate.

It belongs to the purine/pyrimidine phosphoribosyltransferase family. PyrE subfamily. Homodimer. Mg(2+) serves as cofactor.

It catalyses the reaction orotidine 5'-phosphate + diphosphate = orotate + 5-phospho-alpha-D-ribose 1-diphosphate. Its pathway is pyrimidine metabolism; UMP biosynthesis via de novo pathway; UMP from orotate: step 1/2. Catalyzes the transfer of a ribosyl phosphate group from 5-phosphoribose 1-diphosphate to orotate, leading to the formation of orotidine monophosphate (OMP). This chain is Orotate phosphoribosyltransferase, found in Pseudomonas syringae pv. tomato (strain ATCC BAA-871 / DC3000).